The sequence spans 333 residues: T-cell surface glycoprotein CD1b (333 aa).

Positions 1-17 (MLLLPFQLLAVLFPGGN) are cleaved as a signal peptide. The Extracellular portion of the chain corresponds to 18–303 (SEHAFQGPTS…YWRNPTSIGS (286 aa)). 3 N-linked (GlcNAc...) asparagine glycosylation sites follow: Asn38, Asn75, and Asn146. 3 disulfide bridges follow: Cys120/Cys184, Cys149/Cys163, and Cys224/Cys279. The region spanning 185-295 (PRYLLGVLNA…LEGQDIILYW (111 aa)) is the Ig-like domain. N-linked (GlcNAc...) asparagine glycosylation is present at Asn258. A helical membrane pass occupies residues 304-324 (IVLAIIVPSLLLLLCLALWYM). At 325–333 (RRRSYQNIP) the chain is on the cytoplasmic side. The short motif at 329-332 (YQNI) is the Internalization signal element.

In terms of assembly, heterodimer with B2M (beta-2-microglobulin). Interacts with saposin C. Expressed on cortical thymocytes, on certain T-cell leukemias, and in various other tissues.

It localises to the cell membrane. Its subcellular location is the endosome membrane. The protein resides in the lysosome membrane. Its function is as follows. Antigen-presenting protein that binds self and non-self lipid and glycolipid antigens and presents them to T-cell receptors on natural killer T-cells. The sequence is that of T-cell surface glycoprotein CD1b (CD1B) from Homo sapiens (Human).